Reading from the N-terminus, the 283-residue chain is Stage II sporulation protein Q (283 aa).

The chain crosses the membrane as a helical span at residues 22 to 42 (WVFPAIYLVSAAVILTAVLWY). The disordered stretch occupies residues 228–283 (EKAATQETEESIQQSSEKKDGSTEKGTEEKSGEKKDDSTDKSGSKESSTTEDTEQS). Positions 243 to 271 (SEKKDGSTEKGTEEKSGEKKDDSTDKSGS) are enriched in basic and acidic residues.

As to quaternary structure, interacts with SpoIIIAH and SpoIIE.

Its subcellular location is the forespore membrane. Functionally, involved in forespore engulfment and required for anchoring membrane proteins on the forespore side of the septal membrane. Forms a channel with SpoIIIAH that is open on the forespore end and closed (or gated) on the mother cell end. This allows sigma-E-directed gene expression in the mother-cell compartment of the sporangium to trigger the activation of sigma-G forespore-specific gene expression by a pathway of intercellular signaling. This Bacillus subtilis (strain 168) protein is Stage II sporulation protein Q (spoIIQ).